Reading from the N-terminus, the 251-residue chain is Transmembrane ascorbate-dependent reductase CYB561 (251 aa).

Position 1 is an N-acetylmethionine (M1). Residues 1 to 16 are Cytoplasmic-facing; it reads MEGGAAAATPTALPYY. Residues 17–37 traverse the membrane as a helical segment; that stretch reads VAFSQLLGLTLVAMTGAWLGL. Positions 19–220 constitute a Cytochrome b561 domain; sequence FSQLLGLTLV…FGGAVLYILT (202 aa). The Vesicular segment spans residues 38–51; that stretch reads YRGGIAWESDLQFN. A helical membrane pass occupies residues 52 to 72; it reads AHPLCMVIGLIFLQGNALLVY. Residues H53, R73, and K80 each contribute to the heme b site. Residues 73–85 are Cytoplasmic-facing; that stretch reads RVFRNEAKRTTKV. Residues K80 and K84 each coordinate L-ascorbate. A helical membrane pass occupies residues 86-106; that stretch reads LHGLLHIFALVIALVGLVAVF. Heme b-binding positions include H87, 116–119, and H121; that span reads DLYS. Residues 107-124 lie on the Vesicular side of the membrane; the sequence is DYHRKKGYADLYSLHSWC. A helical membrane pass occupies residues 125 to 145; sequence GILVFVLYFVQWLVGFSFFLF. Residues 146-158 lie on the Cytoplasmic side of the membrane; that stretch reads PGASFSLRSRYRP. R153 contributes to the L-ascorbate binding site. The chain crosses the membrane as a helical span at residues 159 to 179; that stretch reads QHIFFGATIFLLSVGTALLGL. Residues H160 and E181 each contribute to the heme b site. The Vesicular segment spans residues 180-198; the sequence is KEALLFNLGGKYSAFEPEG. Residues 199-219 traverse the membrane as a helical segment; the sequence is VLANVLGLLLACFGGAVLYIL. Residues 220–251 lie on the Cytoplasmic side of the membrane; sequence TRADWKRPSQAEEQALSMDFKTLTEGDSPGSQ. K225 is a heme b binding site. At S247 the chain carries Phosphoserine.

Heme b serves as cofactor. Expressed in many tissues, in particular the brain especially in the cortex and hippocampus.

The protein resides in the cytoplasmic vesicle. The protein localises to the secretory vesicle. It is found in the chromaffin granule membrane. The catalysed reaction is monodehydro-L-ascorbate radical(out) + L-ascorbate(in) = monodehydro-L-ascorbate radical(in) + L-ascorbate(out). In terms of biological role, transmembrane reductase that uses ascorbate as an electron donor in the cytoplasm and transfers electrons across membranes to reduce monodehydro-L-ascorbate radical in the lumen of secretory vesicles. It is therefore involved the regeneration and homeostasis within secretory vesicles of ascorbate which in turn provides reducing equivalents needed to support the activity of intravesicular enzymes. The chain is Transmembrane ascorbate-dependent reductase CYB561 from Homo sapiens (Human).